Here is a 622-residue protein sequence, read N- to C-terminus: Calmodulin-binding protein 60 C (622 aa).

Positions 1–19 (MQTRYMERTNSMREKRKLE) are enriched in basic and acidic residues. The tract at residues 1–35 (MQTRYMERTNSMREKRKLEEDDNQQQQQQPERKRP) is disordered. Residues 10 to 89 (NSMREKRKLE…RLSERSSPKR (80 aa)) are calmodulin-binding. The interval 159–282 (EDDDGWSGEE…AFHKKLNKAG (124 aa)) is DNA-binding.

The protein belongs to the plant ACBP60 protein family. In terms of assembly, interacts with calmodulin (CaM). In terms of tissue distribution, expressed in stems, flowers and root.

The protein localises to the nucleus. In terms of biological role, transcription activator that binds DNA in a sequence-specific manner, likely 5'-GAAATTTTGG-3', to promote the expression of target genes. This Arabidopsis thaliana (Mouse-ear cress) protein is Calmodulin-binding protein 60 C.